The sequence spans 426 residues: Serine hydroxymethyltransferase (426 aa).

(6S)-5,6,7,8-tetrahydrofolate-binding positions include L118 and 122–124 (GHL). An N6-(pyridoxal phosphate)lysine modification is found at K227. A disordered region spans residues 342-368 (NTIPNDPKPPTQASGIRLGTPAMTTRG).

This sequence belongs to the SHMT family. Homodimer. It depends on pyridoxal 5'-phosphate as a cofactor.

It localises to the cytoplasm. The enzyme catalyses (6R)-5,10-methylene-5,6,7,8-tetrahydrofolate + glycine + H2O = (6S)-5,6,7,8-tetrahydrofolate + L-serine. It functions in the pathway one-carbon metabolism; tetrahydrofolate interconversion. The protein operates within amino-acid biosynthesis; glycine biosynthesis; glycine from L-serine: step 1/1. In terms of biological role, catalyzes the reversible interconversion of serine and glycine with tetrahydrofolate (THF) serving as the one-carbon carrier. This reaction serves as the major source of one-carbon groups required for the biosynthesis of purines, thymidylate, methionine, and other important biomolecules. Also exhibits THF-independent aldolase activity toward beta-hydroxyamino acids, producing glycine and aldehydes, via a retro-aldol mechanism. In Thermomicrobium roseum (strain ATCC 27502 / DSM 5159 / P-2), this protein is Serine hydroxymethyltransferase.